Here is a 278-residue protein sequence, read N- to C-terminus: tRNA (guanine-N(7)-)-methyltransferase (278 aa).

Residues Gly-95, 118-119 (EI), 153-154 (NA), and Cys-173 each bind S-adenosyl-L-methionine. Asp-176 is an active-site residue. 251–253 (TEE) provides a ligand contact to S-adenosyl-L-methionine.

This sequence belongs to the class I-like SAM-binding methyltransferase superfamily. TrmB family. In terms of assembly, forms a complex with TRM82.

It is found in the nucleus. The catalysed reaction is guanosine(46) in tRNA + S-adenosyl-L-methionine = N(7)-methylguanosine(46) in tRNA + S-adenosyl-L-homocysteine. The protein operates within tRNA modification; N(7)-methylguanine-tRNA biosynthesis. Functionally, catalyzes the formation of N(7)-methylguanine at position 46 (m7G46) in tRNA. The polypeptide is tRNA (guanine-N(7)-)-methyltransferase (Kluyveromyces lactis (strain ATCC 8585 / CBS 2359 / DSM 70799 / NBRC 1267 / NRRL Y-1140 / WM37) (Yeast)).